Reading from the N-terminus, the 132-residue chain is Large ribosomal subunit protein bL20c (132 aa).

Belongs to the bacterial ribosomal protein bL20 family.

The protein resides in the plastid. Its subcellular location is the chloroplast. In terms of biological role, binds directly to 23S ribosomal RNA and is necessary for the in vitro assembly process of the 50S ribosomal subunit. It is not involved in the protein synthesizing functions of that subunit. This is Large ribosomal subunit protein bL20c from Coffea arabica (Arabian coffee).